Reading from the N-terminus, the 394-residue chain is ATP-dependent RNA helicase fal1 (394 aa).

A Q motif motif is present at residues 21-49; it reads SSFEEMNLKEDLLRGIYAYGYETPSAVQS. The Helicase ATP-binding domain maps to 52-222; it reads IIQICKGRDV…NKFTTNPVRI (171 aa). ATP is bound at residue 65-72; the sequence is AQSGTGKT. Residue Ser-67 is modified to Phosphoserine. The DEAD box motif lies at 170 to 173; sequence DEAD. In terms of domain architecture, Helicase C-terminal spans 233 to 394; the sequence is GLKQYFIAVE…EMPMNIGDMV (162 aa).

This sequence belongs to the DEAD box helicase family. DDX48/FAL1 subfamily.

It is found in the nucleus. The protein localises to the nucleolus. The enzyme catalyses ATP + H2O = ADP + phosphate + H(+). Functionally, ATP-dependent RNA helicase involved in 40S ribosomal subunit biogenesis. Required for the processing and cleavage of 35S pre-rRNA at sites A0, A1, and A2, leading to mature 18S rRNA. In Schizosaccharomyces pombe (strain 972 / ATCC 24843) (Fission yeast), this protein is ATP-dependent RNA helicase fal1 (tif412).